We begin with the raw amino-acid sequence, 532 residues long: Wee1-like protein kinase 2 (532 aa).

A disordered region spans residues 123–166 (INPFTPDTVRRNSEHYKRKSQRSDDDEDYGPRSKEIQNSSEDES). The Protein kinase domain maps to 188-465 (FLELACIGVG…RHDVLCKERA (278 aa)). ATP contacts are provided by residues 194 to 202 (IGVGEFGSV) and Lys-217. Residue Asp-315 is the Proton acceptor of the active site. Asn-320 and Asp-354 together coordinate Mg(2+). The stretch at 469–495 (ATQLRKELNVEKFRTAMLERELKEARL) forms a coiled coil.

It belongs to the protein kinase superfamily. Ser/Thr protein kinase family. WEE1 subfamily.

The protein localises to the nucleus. It carries out the reaction L-tyrosyl-[protein] + ATP = O-phospho-L-tyrosyl-[protein] + ADP + H(+). Its function is as follows. Oocyte-specific protein tyrosine kinase that phosphorylates and inhibits cdk1 and acts as a key regulator of meiosis. Required to maintain meiotic arrest in oocytes by phosphorylating cdk1 at 'Tyr-15', leading to inhibit cdk1 activity and prevent meiotic reentry. This Danio rerio (Zebrafish) protein is Wee1-like protein kinase 2 (wee2).